A 189-amino-acid polypeptide reads, in one-letter code: Protein Rex (189 aa).

A compositionally biased stretch (basic residues) spans 1-16 (MPKTRRRPRRSQRKRP). The disordered stretch occupies residues 1 to 28 (MPKTRRRPRRSQRKRPPTPWPTSQGLDR). Positions 2 to 18 (PKTRRRPRRSQRKRPPT) match the Nuclear localization signal, and RNA-binding (RxRE) motif. A homomultimerization region spans residues 56 to 70 (RPVYIVTPYWPPVQS). Residue serine 70 is modified to Phosphoserine; by host. A Nuclear export signal motif is present at residues 82–93 (LSAQLYSSLSLD). The span at 84-94 (AQLYSSLSLDS) shows a compositional bias: low complexity. The segment at 84–189 (AQLYSSLSLD…PPSPGPSCPT (106 aa)) is disordered. Over residues 111–125 (RRPPIQPPTFHPPSS) the composition is skewed to pro residues. The tract at residues 123–131 (PSSRPCANT) is homomultimerization. Residues 127-164 (PCANTPPSETDTWNPPLGSTSQPCLFQTPASGPKTCTP) show a composition bias toward polar residues. The residue at position 174 (threonine 174) is a Phosphothreonine; by host. Phosphoserine; by host is present on serine 177. The span at 178–189 (FPPPSPGPSCPT) shows a compositional bias: pro residues.

Belongs to the deltaretrovirus Rex protein family. In terms of assembly, homomultimer. Multimeric assembly is essential for activity and involves XPO1. Binds to human XPO1 and KPNB1. Interacts (via N-terminal nuclear localization signal) with human NPM1. Phosphorylated.

It localises to the host nucleus. The protein resides in the host nucleolus. It is found in the host cytoplasm. Rex escorts unspliced gag-pro-pol and singly spliced env mRNAs out of the nucleus of infected cells. These mRNAs carry a recognition sequence called Rex responsive element (RxRE or XRE) located at the 3' region of the long terminal repeat (LTR). This function is essential since most HTLV proteins are translated from unspliced or partially spliced pre-mRNAs that cannot exit the nucleus by the pathway used by fully processed cellular mRNAs. Rex itself is translated from a fully spliced mRNA that probably readily exits the nucleus. Rex's nuclear localization signal (NLS) binds directly to KPNB1/importin beta-1 without previous binding to KPNA1/importin alpha-1. KPNB1 binds to the GDP bound form of RAN (Ran-GDP) and targets Rex to the nucleus. In the nucleus, the conversion from Ran-GDP to Ran-GTP dissociates Rex from KPNB1 and allows Rex's binding to the RRE in viral pre-mRNAs. Rex multimerizes on the RRE via cooperative assembly. This multimerization is critical for its full biological activity, since it may shield the viral RNA from being spliced or down-regulated, and probably exposes Rex's nuclear export signal (NES) to the surface. Rex can then form a complex with XPO1/CRM1, RANBP3 and Ran-GTP, leading to nuclear export of the complex. Conversion from Ran-GTP to Ran-GDP mediates dissociation of the Rex/RRE/XPO1/RANBP3/RAN complex, so that Rex can return to the nucleus for a subsequent round of export. This chain is Protein Rex, found in Homo sapiens (Human).